The following is a 101-amino-acid chain: Integration host factor subunit alpha (101 aa).

It belongs to the bacterial histone-like protein family. Heterodimer of an alpha and a beta chain.

Functionally, this protein is one of the two subunits of integration host factor, a specific DNA-binding protein that functions in genetic recombination as well as in transcriptional and translational control. The protein is Integration host factor subunit alpha of Maricaulis maris (strain MCS10) (Caulobacter maris).